A 62-amino-acid polypeptide reads, in one-letter code: Chromatin protein Cren7 (62 aa).

This sequence belongs to the Cren7 family. In terms of assembly, monomer. In terms of processing, methylated at multiple sites, to varying extents.

Its subcellular location is the chromosome. It localises to the cytoplasm. Functionally, a chromatin protein, binds double-stranded DNA without sequence specificity. Constrains negative DNA supercoils. The sequence is that of Chromatin protein Cren7 from Staphylothermus marinus (strain ATCC 43588 / DSM 3639 / JCM 9404 / F1).